Reading from the N-terminus, the 177-residue chain is MRLPKEGDFITIQSYKHDGSLHRTWRDTMVLKTTENAIIGVNDHTLVTESDGRRWVTREPAIVYFHRKYWFNIIAMIRENGTSYYCNLASPYYLDSEALKYIDYDLDVKVFADGEKRLLDVEEYERHKKKMNYSNDLDYILKENVKILVDWINQERGPFSQAYVNIWYKRYIELKNR.

The Proton donor role is filled by arginine 23. Mg(2+) is bound by residues asparagine 87, aspartate 103, aspartate 105, aspartate 107, aspartate 120, and glutamate 123.

It belongs to the Ntdp family. The cofactor is Mg(2+).

The catalysed reaction is a ribonucleoside 5'-triphosphate + H2O = a ribonucleoside 5'-diphosphate + phosphate + H(+). It carries out the reaction a ribonucleoside 5'-diphosphate + H2O = a ribonucleoside 5'-phosphate + phosphate + H(+). In terms of biological role, has nucleoside phosphatase activity towards nucleoside triphosphates and nucleoside diphosphates. In Streptococcus gordonii (strain Challis / ATCC 35105 / BCRC 15272 / CH1 / DL1 / V288), this protein is Nucleoside triphosphate/diphosphate phosphatase.